Here is a 157-residue protein sequence, read N- to C-terminus: 2-C-methyl-D-erythritol 2,4-cyclodiphosphate synthase (157 aa).

2 residues coordinate a divalent metal cation: aspartate 8 and histidine 10. Residues 8–10 (DVH) and 34–35 (HS) contribute to the 4-CDP-2-C-methyl-D-erythritol 2-phosphate site. Histidine 42 provides a ligand contact to a divalent metal cation. Residues 56–58 (DIG), 132–135 (TTNE), and arginine 142 contribute to the 4-CDP-2-C-methyl-D-erythritol 2-phosphate site.

It belongs to the IspF family. Homotrimer. A divalent metal cation is required as a cofactor.

The enzyme catalyses 4-CDP-2-C-methyl-D-erythritol 2-phosphate = 2-C-methyl-D-erythritol 2,4-cyclic diphosphate + CMP. It functions in the pathway isoprenoid biosynthesis; isopentenyl diphosphate biosynthesis via DXP pathway; isopentenyl diphosphate from 1-deoxy-D-xylulose 5-phosphate: step 4/6. Functionally, involved in the biosynthesis of isopentenyl diphosphate (IPP) and dimethylallyl diphosphate (DMAPP), two major building blocks of isoprenoid compounds. Catalyzes the conversion of 4-diphosphocytidyl-2-C-methyl-D-erythritol 2-phosphate (CDP-ME2P) to 2-C-methyl-D-erythritol 2,4-cyclodiphosphate (ME-CPP) with a corresponding release of cytidine 5-monophosphate (CMP). This chain is 2-C-methyl-D-erythritol 2,4-cyclodiphosphate synthase, found in Chlorobium luteolum (strain DSM 273 / BCRC 81028 / 2530) (Pelodictyon luteolum).